The chain runs to 372 residues: Chloroplast protein FOR GROWTH AND FERTILITY 2 (372 aa).

A disordered region spans residues 1-20 (MDRLLQPPSSHSIAPSKFQS). The transit peptide at 1–78 (MDRLLQPPSS…NQSSNFLIAS (78 aa)) directs the protein to the chloroplast. Polar residues predominate over residues 7 to 20 (PPSSHSIAPSKFQS). 7 helical membrane-spanning segments follow: residues 109 to 129 (VILV…PPAF), 161 to 181 (FFAG…LAPL), 195 to 215 (ALWG…FLLL), 231 to 251 (VVGL…SEMP), 281 to 301 (GIVH…LALP), 309 to 329 (FLIM…VFIG), and 352 to 372 (LVAI…FSLY).

Mostly expressed in leaves, stems and flowers, to a lower extent, in roots, floral bud, inflorescence and siliques, and, barely, in seedlings.

The protein resides in the plastid. The protein localises to the chloroplast membrane. It localises to the plastid membrane. Together with CGF1, essential protein which supports female gametogenesis and embryogenesis, probably by securing local energy supply. This is Chloroplast protein FOR GROWTH AND FERTILITY 2 from Arabidopsis thaliana (Mouse-ear cress).